Consider the following 373-residue polypeptide: Alpha-ketoglutarate dependent kainoid synthase (373 aa).

A Fe2OG dioxygenase domain is found at 204-320 (TINSKKMFFT…RSSLITFYEP (117 aa)). Positions 235, 237, and 296 each coordinate Fe cation. A 2-oxoglutarate-binding site is contributed by Arg-311.

It belongs to the iron/ascorbate-dependent oxidoreductase family. The cofactor is Fe(2+).

The catalysed reaction is N-(7'-carboxy-7'-demethylgeranyl)-L-glutamate + 2-oxoglutarate + O2 = isodomoate A + succinate + CO2 + H2O. The enzyme catalyses N-geranyl-L-glutamate + 2-oxoglutarate + O2 = dainate A + succinate + CO2 + H2O. Its pathway is secondary metabolite biosynthesis. In terms of biological role, iron/ascorbate-dependent oxidoreductase: part of the gene cluster that mediates the biosynthesis of domoic acid (DA) and derivatives, natural products with neurochemical activity acting as ionotropic glutamate receptor (iGluR) agonists, thus being neurotoxins causing amnesic shellfish poisoning (ASP). Catalyzes the conversion of 7'-N-carboxy-L-geranyl-L-glutamic acid (cNGG) to isodomoic acid-A. Also mediates the conversion of N-geranyl-L-glutamic acid (L-NGG) to dainic acid A. This is Alpha-ketoglutarate dependent kainoid synthase from Pseudo-nitzschia multiseries (Marine planktonic diatom).